A 140-amino-acid polypeptide reads, in one-letter code: Large ribosomal subunit protein uL22 (140 aa).

Belongs to the universal ribosomal protein uL22 family. As to quaternary structure, part of the 50S ribosomal subunit.

This protein binds specifically to 23S rRNA; its binding is stimulated by other ribosomal proteins, e.g. L4, L17, and L20. It is important during the early stages of 50S assembly. It makes multiple contacts with different domains of the 23S rRNA in the assembled 50S subunit and ribosome. Its function is as follows. The globular domain of the protein is located near the polypeptide exit tunnel on the outside of the subunit, while an extended beta-hairpin is found that lines the wall of the exit tunnel in the center of the 70S ribosome. The sequence is that of Large ribosomal subunit protein uL22 from Parafrankia sp. (strain EAN1pec).